Consider the following 404-residue polypeptide: Voltage-gated potassium channel subunit beta-3 (404 aa).

Residues 1–14 are compositionally biased toward polar residues; that stretch reads MQVSIACTEQNLRS. The disordered stretch occupies residues 1–77; the sequence is MQVSIACTEQ…LRESTGRGTG (77 aa). The span at 28-50 shows a compositional bias: gly residues; it reads PGGGNGGPAGGGHGNPPGGGGSG. Positions 97, 98, 104, and 126 each coordinate NADP(+). The Proton donor/acceptor role is filled by tyrosine 131. The NADP(+) site is built by asparagine 199, serine 229, arginine 230, glutamine 255, tryptophan 284, proline 286, leucine 287, alanine 288, cysteine 289, lysine 295, arginine 305, glycine 364, serine 366, glutamine 370, and glutamate 373.

This sequence belongs to the shaker potassium channel beta subunit family. As to quaternary structure, forms heteromultimeric complex with alpha subunits. Interacts with KCNA5 and KCNB2. Brain specific. Most prominent expression in cerebellum. Weaker signals detected in cortex, occipital lobe, frontal lobe and temporal lobe. Not detected in spinal cord, heart, lung, liver, kidney, pancreas, placenta and skeletal muscle.

The protein localises to the cytoplasm. Regulatory subunit of the voltage-gated potassium (Kv) channels composed of pore-forming and potassium-conducting alpha subunits and of regulatory beta subunit. The beta-3/KCNAB3 subunit may mediate closure of potassium channels. Increases inactivation of Kv1.5/KCNA5 alpha subunit-containing channels. May display nicotinamide adenine dinucleotide phosphate (NADPH)-dependent aldoketoreductase activity. The binding of oxidized and reduced NADP(H) cofactors may be required for the regulation of potassium channel activity. The protein is Voltage-gated potassium channel subunit beta-3 of Homo sapiens (Human).